The primary structure comprises 483 residues: Regulatory protein ViaA (483 aa).

This sequence belongs to the ViaA family. Homodimer. Interacts with RavA.

The protein resides in the cytoplasm. Functionally, component of the RavA-ViaA chaperone complex, which may act on the membrane to optimize the function of some of the respiratory chains. ViaA stimulates the ATPase activity of RavA. The polypeptide is Regulatory protein ViaA (Shigella flexneri serotype 5b (strain 8401)).